Reading from the N-terminus, the 518-residue chain is Serine/threonine-protein kinase UL13 (518 aa).

The disordered stretch occupies residues Met-1–Ser-119. The Protein kinase domain maps to Pro-151–Ser-518. Residues Gly-157–Val-165 and Lys-176 each bind ATP. The active-site Proton acceptor is the Asp-277.

This sequence belongs to the protein kinase superfamily. Ser/Thr protein kinase family. Autophosphorylated.

The protein localises to the virion tegument. It localises to the host nucleus. The enzyme catalyses L-seryl-[protein] + ATP = O-phospho-L-seryl-[protein] + ADP + H(+). The catalysed reaction is L-threonyl-[protein] + ATP = O-phospho-L-threonyl-[protein] + ADP + H(+). Its function is as follows. Multifunctional serine/threonine kinase that plays a role in several processes including egress of virus particles from the nucleus, modulation of the actin cytoskeleton and regulation of viral and cellular gene expression. Regulates the nuclear localization of viral envelopment factors UL34 and UL31, by phosphorylating the US3 kinase, indicating a role in nuclear egress. Disrupts host nuclear lamins, including LMNA and LMNB1. Phosphorylates the viral Fc receptor composed of glycoproteins E (gE) and I (gI). Phosphorylation of glycoprotein E (gE) by UL13 alters its subcellular localization, from the host early endosome to the plasma membrane. Participates in the transcriptional regulation of cellular and viral mRNAs mainly by phosphorylating the viral transcriptional regulator ICP22. Additional substrates have been identified, including UL41, UL49 or host EF1D. In Homo sapiens (Human), this protein is Serine/threonine-protein kinase UL13.